We begin with the raw amino-acid sequence, 232 residues long: Large ribosomal subunit protein uL1 (232 aa).

The protein belongs to the universal ribosomal protein uL1 family. As to quaternary structure, part of the 50S ribosomal subunit.

Functionally, binds directly to 23S rRNA. The L1 stalk is quite mobile in the ribosome, and is involved in E site tRNA release. Protein L1 is also a translational repressor protein, it controls the translation of the L11 operon by binding to its mRNA. This Burkholderia multivorans (strain ATCC 17616 / 249) protein is Large ribosomal subunit protein uL1.